The following is a 591-amino-acid chain: Formate--tetrahydrofolate ligase (591 aa).

74–81 lines the ATP pocket; sequence TPLGEGKS.

The protein belongs to the formate--tetrahydrofolate ligase family.

It carries out the reaction (6S)-5,6,7,8-tetrahydrofolate + formate + ATP = (6R)-10-formyltetrahydrofolate + ADP + phosphate. It participates in one-carbon metabolism; tetrahydrofolate interconversion. This chain is Formate--tetrahydrofolate ligase, found in Lawsonia intracellularis (strain PHE/MN1-00).